Reading from the N-terminus, the 522-residue chain is Glycogen synthase (522 aa).

The interval 1–29 (MISAVLDTQGDHPQQQAGDRAAPSVPVPG) is disordered. Residue lysine 58 coordinates ADP-alpha-D-glucose.

It belongs to the glycosyltransferase 1 family. Bacterial/plant glycogen synthase subfamily.

It carries out the reaction [(1-&gt;4)-alpha-D-glucosyl](n) + ADP-alpha-D-glucose = [(1-&gt;4)-alpha-D-glucosyl](n+1) + ADP + H(+). The protein operates within glycan biosynthesis; glycogen biosynthesis. Its function is as follows. Synthesizes alpha-1,4-glucan chains using ADP-glucose. This is Glycogen synthase from Pseudomonas fluorescens (strain ATCC BAA-477 / NRRL B-23932 / Pf-5).